The following is an 818-amino-acid chain: H(+)/Cl(-) exchange transporter 3 (818 aa).

Residues 1–125 are Cytoplasmic-facing; that stretch reads MESEQLFHRG…WEMTKSLYDA (125 aa). The Di-leucine internalization motif; mediates targeting to late endosome and lysosome membranes motif lies at 13 to 17; that stretch reads RNSYN. An IP motif; mediates targeting to recycling endosomes motif is present at residues 18 to 19; the sequence is SI. Short sequence motifs (di-leucine internalization motif; mediates targeting to late endosome and lysosome membranes) lie at residues 28 to 29, 46 to 47, and 71 to 75; these read LL and LLDLL. Residues 126–163 traverse the membrane as a helical segment; sequence WSGWLVVTLTGLASGALAGLIDIAADWMTDLKEGICLS. Residue asparagine 177 is glycosylated (N-linked (GlcNAc...) asparagine). The chain crosses the membrane as a helical span at residues 209–232; it reads MNYIMYIFWALSFAFLAVSLVKVF. The Selectivity filter part_1 signature appears at 238 to 242; the sequence is GSGIP. Serine 239 is a binding site for chloride. The segment at residues 241-248 is an intramembrane region (helical); it reads IPEIKTIL. A run of 2 helical transmembrane segments spans residues 258–276 and 282–301; these read GKWT…VASG and EGPL…YLFP. The Selectivity filter part_2 motif lies at 280 to 284; the sequence is GKEGP. Intramembrane regions (helical) lie at residues 313–325 and 329–337; these read VLSA…VSVA and PIGGVLFSL. 3 consecutive transmembrane segments (helical) span residues 349 to 367, 391 to 416, and 423 to 443; these read LWRS…RSIN, FPFI…AWCR, and FGKY…VIAF. Asparagine 451 and asparagine 479 each carry an N-linked (GlcNAc...) asparagine glycan. The next 2 helical transmembrane spans lie at 500–520 and 525–544; these read IWQL…TFGI and GLFI…VGIA. Positions 525 to 529 match the Selectivity filter part_3 motif; sequence GLFIP. Chloride is bound at residue phenylalanine 527. Intramembrane regions (helical) lie at residues 572-586 and 590-601; these read GLYA…LGGV and TVSLVVIVFELT. The segment at residues 602–605 is an intramembrane region (note=Loop between two helices); the sequence is GGLE. Residues 606-624 traverse the membrane as a helical segment; it reads YIVPLMAAVMTSKWVGDAF. The Cytoplasmic segment spans residues 625-818; it reads GREGIYEAHI…NQDPASIMFN (194 aa). Tyrosine 630 is a binding site for chloride. 2 consecutive CBS domains span residues 658-722 and 755-812; these read MRPR…ARKK and LDMS…NQDP. Residues 689–691 and 796–799 contribute to the ATP site; these read YNG and TKKD.

Belongs to the chloride channel (TC 2.A.49) family. ClC-3/CLCN3 subfamily. In terms of assembly, monomer and homodimer. Forms heterodimers with CLCN4. N-glycosylated. As to expression, detected in kidney, in the apical part of proximal tubule cells (at protein level). Expressed at high levels in the kidney while a low level expression is seen in the brain. Within the brain, it is prominent in the hippocampus, cerebral cortex and olfactory bulb. Brain, pancreas, kidney, liver, lung, retina, olfactory bulb, and spinal cord. In terms of tissue distribution, pancreas, kidney, liver, lung and retina. As to expression, brain, heart, pancreas, kidney, liver, lung, retina, olfactory bulb, and spinal cord. Expressed at high levels in the liver and at low levels in the brain.

It localises to the cytoplasmic vesicle. The protein localises to the secretory vesicle membrane. It is found in the lysosome membrane. The protein resides in the late endosome membrane. Its subcellular location is the cell membrane. It localises to the early endosome membrane. The protein localises to the recycling endosome membrane. Inhibited by Cd(2+). In terms of biological role, may influence large dense-core vesicle exocytosis in adrenal chromaffin cells. Functionally, strongly outwardly rectifying, electrogenic H(+)/Cl(-)exchanger which mediates the exchange of chloride ions against protons. The CLC channel family contains both chloride channels and proton-coupled anion transporters that exchange chloride or another anion for protons. The presence of conserved gating glutamate residues is typical for family members that function as antiporters. Strongly outwardly rectifying, electrogenic H(+)/Cl(-)exchanger which mediates the exchange of chloride ions against protons. Facilitates endosomal acidification and chloride accumulation in hepatocytes. Its function is as follows. Strongly outwardly rectifying, electrogenic H(+)/Cl(-)exchanger which mediates the exchange of chloride ions against protons. The chain is H(+)/Cl(-) exchange transporter 3 (Clcn3) from Mus musculus (Mouse).